The chain runs to 254 residues: Ciliary microtubule associated protein 1A (254 aa).

STPGR repeat units follow at residues 180 to 205 (PGPA…MAAR) and 216 to 241 (PGPG…FGIK). The tract at residues 207 to 226 (EPPGDKTLKPGPGAHSPEKV) is disordered.

The protein belongs to the CIMAP family. In terms of assembly, microtubule inner protein component of sperm flagellar doublet microtubules. Testis-specific.

Its subcellular location is the cytoplasm. It is found in the cytoskeleton. The protein localises to the flagellum axoneme. Outer dense fibers are filamentous structures located on the outside of the axoneme in the midpiece and principal piece of the mammalian sperm tail. May help to maintain the passive elastic structures and elastic recoil of the sperm tail. In Homo sapiens (Human), this protein is Ciliary microtubule associated protein 1A.